We begin with the raw amino-acid sequence, 471 residues long: Phosphatidate cytidylyltransferase 3 (471 aa).

The disordered stretch occupies residues 1 to 72 (MAMEKDLSPN…HRRRSSENLA (72 aa)). The segment covering 21-35 (SYPTTPTSRMNTNNQ) has biased composition (polar residues). 8 consecutive transmembrane segments (helical) span residues 97-116 (WIRT…IIYM), 120-139 (YIWA…LFFL), 149-169 (LPGF…FVYG), 196-216 (YQMV…ILTL), 228-250 (YAWT…ANIF), 255-277 (WFLL…GFYF), 293-313 (GFIG…NVLG), and 368-388 (FSLG…ASGF).

It belongs to the CDS family. The cofactor is Mg(2+).

It localises to the membrane. The enzyme catalyses a 1,2-diacyl-sn-glycero-3-phosphate + CTP + H(+) = a CDP-1,2-diacyl-sn-glycerol + diphosphate. It participates in phospholipid metabolism; CDP-diacylglycerol biosynthesis; CDP-diacylglycerol from sn-glycerol 3-phosphate: step 3/3. In terms of biological role, may be involved in the synthesis of minor phospholipids and in modulation of IP3-mediated signal transduction. The chain is Phosphatidate cytidylyltransferase 3 from Arabidopsis thaliana (Mouse-ear cress).